A 1375-amino-acid polypeptide reads, in one-letter code: DNA-directed RNA polymerase subunit beta (1375 aa).

The protein belongs to the RNA polymerase beta chain family. The RNAP catalytic core consists of 2 alpha, 1 beta, 1 beta' and 1 omega subunit. When a sigma factor is associated with the core the holoenzyme is formed, which can initiate transcription.

It catalyses the reaction RNA(n) + a ribonucleoside 5'-triphosphate = RNA(n+1) + diphosphate. Functionally, DNA-dependent RNA polymerase catalyzes the transcription of DNA into RNA using the four ribonucleoside triphosphates as substrates. This is DNA-directed RNA polymerase subunit beta from Methylorubrum populi (strain ATCC BAA-705 / NCIMB 13946 / BJ001) (Methylobacterium populi).